Consider the following 270-residue polypeptide: Homeobox protein Hox-D12 (270 aa).

Residues 102-122 (APEAAAGPEERGRTRPSFAPE) are disordered. The homeobox DNA-binding region spans 202-261 (ARKKRKPYTKQQIAELENEFLVNEFINRQKRKELSNRLNLSDQQVKIWFQNRRMKKKRVV).

The protein belongs to the Abd-B homeobox family.

It localises to the nucleus. Functionally, sequence-specific transcription factor which is part of a developmental regulatory system that provides cells with specific positional identities on the anterior-posterior axis. This chain is Homeobox protein Hox-D12 (HOXD12), found in Homo sapiens (Human).